We begin with the raw amino-acid sequence, 360 residues long: Protein Wnt-2 (360 aa).

Residues 1-25 (MNAPLGGIWLWLPLLLTWLSPEVSS) form the signal peptide. 11 disulfides stabilise this stretch: Cys-76-Cys-87, Cys-127-Cys-135, Cys-137-Cys-157, Cys-206-Cys-220, Cys-208-Cys-215, Cys-278-Cys-309, Cys-294-Cys-304, Cys-308-Cys-348, Cys-324-Cys-339, Cys-326-Cys-336, and Cys-331-Cys-332. Ser-212 is lipidated: O-palmitoleoyl serine; by PORCN. Asn-295 is a glycosylation site (N-linked (GlcNAc...) asparagine).

Belongs to the Wnt family. Palmitoleoylation is required for efficient binding to frizzled receptors. Depalmitoleoylation leads to Wnt signaling pathway inhibition.

The protein resides in the secreted. It localises to the extracellular space. Its subcellular location is the extracellular matrix. Ligand for members of the frizzled family of seven transmembrane receptors. Probable developmental protein. May be a signaling molecule which affects the development of discrete regions of tissues. Is likely to signal over only few cell diameters. The sequence is that of Protein Wnt-2 (WNT2) from Carollia perspicillata (Seba's short-tailed bat).